The sequence spans 471 residues: Vanillate/3-O-methylgallate O-demethylase (471 aa).

Residue tyrosine 31 coordinates substrate. A (6S)-5,6,7,8-tetrahydrofolate-binding site is contributed by glutamine 57. Histidine 60 is a substrate binding site. (6S)-5,6,7,8-tetrahydrofolate contacts are provided by glutamine 93 and valine 120. Arginine 122 is a binding site for substrate. (6S)-5,6,7,8-tetrahydrofolate contacts are provided by glutamine 165 and glutamate 215. Residue 247-250 (YPSN) participates in substrate binding. (6S)-5,6,7,8-tetrahydrofolate is bound at residue tryptophan 256.

This sequence belongs to the GcvT family. Homodimer.

It catalyses the reaction vanillate + (6S)-5,6,7,8-tetrahydrofolate = (6S)-5-methyl-5,6,7,8-tetrahydrofolate + 3,4-dihydroxybenzoate. The enzyme catalyses 3-O-methylgallate + (6S)-5,6,7,8-tetrahydrofolate = 3,4,5-trihydroxybenzoate + (6S)-5-methyl-5,6,7,8-tetrahydrofolate. It participates in secondary metabolite metabolism; lignin degradation. Involved in the catabolism of vanillate and syringate. Catalyzes the transfer of a methyl moiety from vanillate or 3-O-methylgallate (3MGA) to tetrahydrofolate, forming protocatechuate (PCA) or gallate, respectively, and methyl-tetrahydrofolate. Has similar activities with both substrates. Cannot use syringate. Uses an ordered, sequential kinetic mechanism. The chain is Vanillate/3-O-methylgallate O-demethylase from Sphingobium sp. (strain NBRC 103272 / SYK-6).